A 281-amino-acid chain; its full sequence is Phosphatidylglycerol--prolipoprotein diacylglyceryl transferase (281 aa).

A run of 7 helical transmembrane segments spans residues 11–31 (IIFT…VISF), 57–77 (LLYS…IIFY), 89–109 (VFYI…AIIV), 121–141 (ILEI…AGRI), 194–214 (PTQL…IYFF), 222–242 (GSIS…IEFF), and 255–275 (IITM…IIMY). Residue arginine 140 participates in a 1,2-diacyl-sn-glycero-3-phospho-(1'-sn-glycerol) binding.

The protein belongs to the Lgt family.

The protein localises to the cell inner membrane. It catalyses the reaction L-cysteinyl-[prolipoprotein] + a 1,2-diacyl-sn-glycero-3-phospho-(1'-sn-glycerol) = an S-1,2-diacyl-sn-glyceryl-L-cysteinyl-[prolipoprotein] + sn-glycerol 1-phosphate + H(+). The protein operates within protein modification; lipoprotein biosynthesis (diacylglyceryl transfer). In terms of biological role, catalyzes the transfer of the diacylglyceryl group from phosphatidylglycerol to the sulfhydryl group of the N-terminal cysteine of a prolipoprotein, the first step in the formation of mature lipoproteins. This Buchnera aphidicola subsp. Acyrthosiphon pisum (strain 5A) protein is Phosphatidylglycerol--prolipoprotein diacylglyceryl transferase.